Here is a 393-residue protein sequence, read N- to C-terminus: Iripin-3 (393 aa).

A signal peptide spans 1–16 (MKVITAFLSVFVLCSA). N-linked (GlcNAc...) asparagine glycosylation is found at asparagine 104 and asparagine 265.

This sequence belongs to the serpin family. As to quaternary structure, interacts with human KLKB1. Interacts with human ST14. Interacts with human F2 (thrombin). As to expression, saliva (at protein level). Expressed in salivary gland. Expressed in ovary during blood feeding.

The protein resides in the secreted. Serine protease inhibitor that modulates blood feeding of ticks on vertebrate species. Moderately inhibits host plasma kallikrein (KLKB1), matriptase (ST14), trypsin, plasmin (PLG), thrombin (F2) and coagulation factor VIIa (F7). Slightly inhibits host alpha-chymotrypsin, tPA/tissue-type plasminogen activator (PLAT), uPA/urokinase-type plasminogen activator (PLAU) and coagulation factor XIIa (F12). Slightly inhibits the extrinsic pathway while not affecting the intrinsic and common pathways of host blood coagulation. Decreases synthesis and secretion of IL6 by mouse bone marrow-derived macrophages. Decreases viability of mouse B- and T-cells. Decreases proliferation of mouse CD4+ T-cells in response to stimulation. Inhibits Th1 immune responses in mouse cells. Promotes differentiation of mouse regulatory T-cells. The sequence is that of Iripin-3 from Ixodes ricinus (Common tick).